A 352-amino-acid polypeptide reads, in one-letter code: DNA polymerase IV (352 aa).

Positions 6–186 constitute a UmuC domain; it reads IIHIDMDAFY…LPLGKIPGVG (181 aa). Residues Asp-10 and Asp-104 each coordinate Mg(2+). Glu-105 is a catalytic residue.

The protein belongs to the DNA polymerase type-Y family. In terms of assembly, monomer. Mg(2+) is required as a cofactor.

The protein resides in the cytoplasm. It carries out the reaction DNA(n) + a 2'-deoxyribonucleoside 5'-triphosphate = DNA(n+1) + diphosphate. Functionally, poorly processive, error-prone DNA polymerase involved in untargeted mutagenesis. Copies undamaged DNA at stalled replication forks, which arise in vivo from mismatched or misaligned primer ends. These misaligned primers can be extended by PolIV. Exhibits no 3'-5' exonuclease (proofreading) activity. May be involved in translesional synthesis, in conjunction with the beta clamp from PolIII. This Neisseria meningitidis serogroup A / serotype 4A (strain DSM 15465 / Z2491) protein is DNA polymerase IV.